A 354-amino-acid polypeptide reads, in one-letter code: Uroporphyrinogen decarboxylase (354 aa).

Substrate-binding positions include 27 to 31 (RQAGR), Asp-77, Tyr-154, Ser-209, and His-327.

Belongs to the uroporphyrinogen decarboxylase family. In terms of assembly, homodimer.

Its subcellular location is the cytoplasm. It catalyses the reaction uroporphyrinogen III + 4 H(+) = coproporphyrinogen III + 4 CO2. It functions in the pathway porphyrin-containing compound metabolism; protoporphyrin-IX biosynthesis; coproporphyrinogen-III from 5-aminolevulinate: step 4/4. Functionally, catalyzes the decarboxylation of four acetate groups of uroporphyrinogen-III to yield coproporphyrinogen-III. In Shewanella denitrificans (strain OS217 / ATCC BAA-1090 / DSM 15013), this protein is Uroporphyrinogen decarboxylase.